Here is a 101-residue protein sequence, read N- to C-terminus: Chaperone modulatory protein CbpM (101 aa).

This sequence belongs to the CbpM family.

Its function is as follows. Interacts with CbpA and inhibits both the DnaJ-like co-chaperone activity and the DNA binding activity of CbpA. Together with CbpA, modulates the activity of the DnaK chaperone system. Does not inhibit the co-chaperone activity of DnaJ. The polypeptide is Chaperone modulatory protein CbpM (Pseudomonas putida (strain ATCC 47054 / DSM 6125 / CFBP 8728 / NCIMB 11950 / KT2440)).